The primary structure comprises 187 residues: Nucleoside-triphosphatase THEP1 (187 aa).

ATP is bound by residues Gly-9–Thr-16 and Leu-100–Gly-107.

The protein belongs to the THEP1 NTPase family.

The catalysed reaction is a ribonucleoside 5'-triphosphate + H2O = a ribonucleoside 5'-diphosphate + phosphate + H(+). In terms of biological role, has nucleotide phosphatase activity towards ATP, GTP, CTP, TTP and UTP. May hydrolyze nucleoside diphosphates with lower efficiency. The polypeptide is Nucleoside-triphosphatase THEP1 (Hyperthermus butylicus (strain DSM 5456 / JCM 9403 / PLM1-5)).